The chain runs to 281 residues: Voltage-dependent L-type calcium channel subunit alpha-1S (281 aa).

The III repeat unit spans residues 1-8; that stretch reads VGFVIVTF. The segment at 1-17 is dihydropyridine binding; it reads VGFVIVTFQEQGESEYK. The stretch at 45 to 281 is one IV repeat; sequence NPYQYQIWYV…TCGTGFAYFY (237 aa). The chain crosses the membrane as a helical span at residues 59–80; that stretch reads YFEYLMFFLIMLNTICLGMQHY. Asparagine 81 carries an N-linked (GlcNAc...) asparagine glycan. The helical transmembrane segment at 89 to 110 threads the bilayer; sequence VSDILNVAFTVLFTLEMILKLM. The chain crosses the membrane as a helical span at residues 121-140; it reads PWNVFDFLIVIGSIIDVILS. The helical transmembrane segment at 153 to 171 threads the bilayer; it reads ITFFRLFRVMRLVKLLSRG. The chain crosses the membrane as a helical span at residues 190–210; sequence YVALLIVMLFFIYAVIGMQMF. Positions 233–251 form an intramembrane region, pore-forming; it reads AVLLLFRCATGEAWQEILL. Positions 242 to 245 match the Selectivity filter of repeat IV motif; the sequence is TGEA. Residues 258–281 form a dihydropyridine binding region; the sequence is RCDPESDYAEGEEYTCGTGFAYFY. Residues cysteine 259 and cysteine 273 are joined by a disulfide bond. The phenylalkylamine binding stretch occupies residues 270-281; the sequence is EYTCGTGFAYFY.

This sequence belongs to the calcium channel alpha-1 subunit (TC 1.A.1.11) family. CACNA1S subfamily. In terms of assembly, component of a calcium channel complex consisting of a pore-forming alpha subunit (CACNA1S) and the ancillary subunits CACNB1 or CACNB2, CACNG1 and CACNA2D1. The channel complex contains alpha, beta, gamma and delta subunits in a 1:1:1:1 ratio, i.e. it contains either CACNB1 or CACNB2. CACNA1S channel activity is modulated by the auxiliary subunits (CACNB1 or CACNB2, CACNG1 and CACNA2D1). Interacts with DYSF and JSRP1. Interacts with RYR1. Interacts with CALM. Post-translationally, the alpha-1S subunit is found in two isoforms in the skeletal muscle: a minor form of 212 kDa containing the complete amino acid sequence, and a major form of 190 kDa derived from the full-length form by post-translational proteolysis close to Phe-1690. In terms of processing, both the minor and major forms are phosphorylated in vitro by PKA. Phosphorylation by PKA activates the calcium channel.

The protein localises to the cell membrane. It is found in the sarcolemma. It localises to the T-tubule. The enzyme catalyses Ca(2+)(in) = Ca(2+)(out). With respect to regulation, channel activity is blocked by dihydropyridines (DHP), phenylalkylamines, and by benzothiazepines. Pore-forming, alpha-1S subunit of the voltage-gated calcium channel that gives rise to L-type calcium currents in skeletal muscle. Calcium channels containing the alpha-1S subunit play an important role in excitation-contraction coupling in skeletal muscle via their interaction with RYR1, which triggers Ca(2+) release from the sarcplasmic reticulum and ultimately results in muscle contraction. Long-lasting (L-type) calcium channels belong to the 'high-voltage activated' (HVA) group. This chain is Voltage-dependent L-type calcium channel subunit alpha-1S (CACNA1S), found in Gallus gallus (Chicken).